The following is a 197-amino-acid chain: Chaperone protein dnaJ 20, chloroplastic (197 aa).

Residues 1–60 (MKCYKSSSILSTNHHPFFYKQQPISSLQPTSIPTTISYPTRTRFSSTRIQSRLTHDDPVK) constitute a chloroplast transit peptide. A J domain is found at 66 to 133 (SFYDLLGVTE…RRRVLYDRDL (68 aa)). Residues 169–197 (SGLRRRSNQKDNNTMSWAARMRRQQQESS) form a disordered region.

The protein belongs to the DnaJ family. C/III subfamily. Light-grown seedlings.

The protein resides in the plastid. The protein localises to the chloroplast. In terms of biological role, plays a continuous role in plant development probably in the structural organization of compartments. In Arabidopsis thaliana (Mouse-ear cress), this protein is Chaperone protein dnaJ 20, chloroplastic (ATJ20).